Reading from the N-terminus, the 304-residue chain is Cell surface-binding protein OPG105 (304 aa).

One can recognise an Alpha-carbonic anhydrase domain in the interval 1–235 (MPQQLSPINI…NDDTQVYYSG (235 aa)). The Virion surface segment spans residues 1 to 275 (MPQQLSPINI…YQKYIEGNKT (275 aa)). Residues 276–294 (FAIIAIVFVFILTAILFLM) form a helical membrane-spanning segment. Topologically, residues 295-304 (SRRYSREKQN) are intravirion.

Belongs to the alpha-carbonic anhydrase family. Homodimer; disulfide-linked. In terms of processing, apparently non-glycosylated.

Its subcellular location is the virion membrane. Its function is as follows. Binds to chondroitin sulfate on the cell surface to provide virion attachment to target cell. In Vaccinia virus (strain Copenhagen) (VACV), this protein is Cell surface-binding protein OPG105 (OPG105).